The primary structure comprises 315 residues: MNPNFLDFEQPIADLQAKIEGLRLVGNDNSLNISDEIARLQDKSNTLTESIFGNLTSWQIARLARHPRRPYTLDYLEHIFTEFEELHGDRHFSDDAAIVGGTARLDGKPVMVIGHQKGREVREKVRRNFGMPRPEGYRKACRLMEMAERFKMPILTFIDTPGAYPGIDAEERNQSEAIAWNLRVMARLKTPIIATVIGEGGSGGALAIGVCDQLNMLQYSTYSVISPEGCASILWKTADKAADAAEAMGITAERLKSLNIVDKVIQEPLGGAHRDPAKMSESIRADLVQQLDMLGKFDNDALLARRYERLMSYGL.

One can recognise a CoA carboxyltransferase C-terminal domain in the interval 32–293; sequence NISDEIARLQ…RADLVQQLDM (262 aa).

This sequence belongs to the AccA family. Acetyl-CoA carboxylase is a heterohexamer composed of biotin carboxyl carrier protein (AccB), biotin carboxylase (AccC) and two subunits each of ACCase subunit alpha (AccA) and ACCase subunit beta (AccD).

It localises to the cytoplasm. It carries out the reaction N(6)-carboxybiotinyl-L-lysyl-[protein] + acetyl-CoA = N(6)-biotinyl-L-lysyl-[protein] + malonyl-CoA. The protein operates within lipid metabolism; malonyl-CoA biosynthesis; malonyl-CoA from acetyl-CoA: step 1/1. In terms of biological role, component of the acetyl coenzyme A carboxylase (ACC) complex. First, biotin carboxylase catalyzes the carboxylation of biotin on its carrier protein (BCCP) and then the CO(2) group is transferred by the carboxyltransferase to acetyl-CoA to form malonyl-CoA. This Pseudomonas putida (strain ATCC 47054 / DSM 6125 / CFBP 8728 / NCIMB 11950 / KT2440) protein is Acetyl-coenzyme A carboxylase carboxyl transferase subunit alpha.